The chain runs to 742 residues: Envelope glycoprotein H (742 aa).

The N-terminal stretch at 1–23 (MRPGLPSYLIILAVCLFSHLLSS) is a signal peptide. Over 24-719 (RYGAEAVSEP…VVDATDSRLL (696 aa)) the chain is Virion surface. Asn-55, Asn-62, Asn-67, and Asn-192 each carry an N-linked (GlcNAc...) asparagine; by host glycan. Residues Cys-195 and Cys-211 are joined by a disulfide bond. The tract at residues 217-280 (YLIDELRYVK…QTEKHELLVL (64 aa)) is interaction with gL. 3 disulfides stabilise this stretch: Cys-330/Cys-383, Cys-495/Cys-522, and Cys-571/Cys-624. Residues Asn-641 and Asn-700 are each glycosylated (N-linked (GlcNAc...) asparagine; by host). A helical membrane pass occupies residues 720–740 (MMSVYALSAIIGIYLLYRMLK). The Intravirion portion of the chain corresponds to 741–742 (TC).

This sequence belongs to the herpesviridae glycoprotein H family. In terms of assembly, interacts with glycoprotein L (gL); this interaction is necessary for the correct processing and cell surface expression of gH. The heterodimer gH/gL seems to interact with gB trimers during fusion. Forms the envelope pentamer complex (PC) composed of gH, gL, UL128, UL130, and UL131A. The pentamer interacts with host NRP2. Forms the envelope trimer complex composed of gH, gL, and gO. The trimer interacts with host PDGFRA. The trimer also interacts with host EPHA2. The trimer also interacts with host TGFBR3. Interacts with UL116. In terms of processing, N-glycosylated, O-glycosylated, and sialylated.

The protein localises to the virion membrane. Its subcellular location is the host cell membrane. It localises to the host endosome membrane. The heterodimer glycoprotein H-glycoprotein L is required for the fusion of viral and plasma membranes leading to virus entry into the host cell. Following initial binding to host receptor, membrane fusion is mediated by the fusion machinery composed of gB and the heterodimer gH/gL. May also be involved in the fusion between the virion envelope and the outer nuclear membrane during virion morphogenesis. In human cytomegalovirus, forms two distincts complexes to mediate viral entry, a trimer and a pentamer at the surface of the virion envelope. The gH-gL-gO trimer is required for infection in fibroblasts by interacting with host PDGFRA, and in glioblastoma cells by interacting with host EPHA2. Thsi trimer may also be required in other cell types using host TGFBR3. The gH-gL-UL128-UL130-UL131A pentamer is essential for viral entry in epithelial, endothelial and myeloid cells via interaction with host NRP2. The chain is Envelope glycoprotein H from Human cytomegalovirus (strain Merlin) (HHV-5).